Consider the following 1209-residue polypeptide: Pre-mRNA-splicing factor rse1 (1209 aa).

This sequence belongs to the RSE1 family. As to quaternary structure, associated with the spliceosome.

The protein localises to the nucleus. Involved in pre-mRNA splicing and cell cycle control. The sequence is that of Pre-mRNA-splicing factor rse1 (rse1) from Emericella nidulans (strain FGSC A4 / ATCC 38163 / CBS 112.46 / NRRL 194 / M139) (Aspergillus nidulans).